Here is an 84-residue protein sequence, read N- to C-terminus: Subtilisin-chymotrypsin inhibitor WSCI (84 aa).

The N-terminal stretch at 1 to 12 (MSSVVKKPLGGN) is a signal peptide. The interval 1–28 (MSSVVKKPLGGNTDTGDHHNQKTEWPEL) is disordered. The segment covering 15 to 25 (TGDHHNQKTEW) has biased composition (basic and acidic residues).

In terms of assembly, monomer.

The protein localises to the secreted. Inhibits B.lichenoformis subtilisin, B.subtilis subtilisin, bovine pancreatic alpha-chymotrypsin and porcine alpha-chymotrypsin with Ki of 3.92 nM, 5.70 nM, 7.24 nM and 9.35 nM respectively. B.lichenoformis subtilisin is inhibited with a molar ratio of 1:0.87. Also inhibits chymotrypsin-like activities from the digestive tracts of the insect larvae T.molitor, P.interpunctella and H.armigera. Does not inhibit bovine pancreatic trypsin, porcine pancreatic elastase, or human leukocyte elastase. This chain is Subtilisin-chymotrypsin inhibitor WSCI, found in Triticum aestivum (Wheat).